Here is a 195-residue protein sequence, read N- to C-terminus: Thymidine kinase (195 aa).

ATP is bound by residues 9-16 (STMNAGKS) and 87-90 (DEAQ). Glu88 (proton acceptor) is an active-site residue. The Zn(2+) site is built by Cys145, Cys147, Cys182, and His185.

It belongs to the thymidine kinase family. As to quaternary structure, homotetramer.

Its subcellular location is the cytoplasm. It carries out the reaction thymidine + ATP = dTMP + ADP + H(+). The chain is Thymidine kinase from Mannheimia succiniciproducens (strain KCTC 0769BP / MBEL55E).